Here is a 312-residue protein sequence, read N- to C-terminus: tRNA dimethylallyltransferase (312 aa).

10–17 (GPTAVGKT) serves as a coordination point for ATP. 12 to 17 (TAVGKT) is a substrate binding site. The segment at 35-38 (DSMQ) is interaction with substrate tRNA.

It belongs to the IPP transferase family. As to quaternary structure, monomer. Mg(2+) is required as a cofactor.

The enzyme catalyses adenosine(37) in tRNA + dimethylallyl diphosphate = N(6)-dimethylallyladenosine(37) in tRNA + diphosphate. Functionally, catalyzes the transfer of a dimethylallyl group onto the adenine at position 37 in tRNAs that read codons beginning with uridine, leading to the formation of N6-(dimethylallyl)adenosine (i(6)A). This is tRNA dimethylallyltransferase from Alkaliphilus metalliredigens (strain QYMF).